The chain runs to 391 residues: Phosphoglycerate kinase (391 aa).

Substrate contacts are provided by residues 21–23, arginine 36, 59–62, arginine 113, and arginine 146; these read DLN and HLGR. Residues lysine 197, glutamate 319, and 345-348 each bind ATP; that span reads GGDT.

The protein belongs to the phosphoglycerate kinase family. As to quaternary structure, monomer.

The protein localises to the cytoplasm. The catalysed reaction is (2R)-3-phosphoglycerate + ATP = (2R)-3-phospho-glyceroyl phosphate + ADP. It functions in the pathway carbohydrate degradation; glycolysis; pyruvate from D-glyceraldehyde 3-phosphate: step 2/5. The protein is Phosphoglycerate kinase of Xanthomonas euvesicatoria pv. vesicatoria (strain 85-10) (Xanthomonas campestris pv. vesicatoria).